The sequence spans 209 residues: Kynurenine formamidase (209 aa).

Position 19 (tryptophan 19) interacts with substrate. Histidine 49, histidine 53, and aspartate 55 together coordinate Zn(2+). The active-site Proton donor/acceptor is the histidine 59. Zn(2+)-binding residues include histidine 160 and glutamate 172.

Belongs to the Cyclase 1 superfamily. KynB family. As to quaternary structure, homodimer. Zn(2+) is required as a cofactor.

It carries out the reaction N-formyl-L-kynurenine + H2O = L-kynurenine + formate + H(+). The protein operates within amino-acid degradation; L-tryptophan degradation via kynurenine pathway; L-kynurenine from L-tryptophan: step 2/2. Its function is as follows. Catalyzes the hydrolysis of N-formyl-L-kynurenine to L-kynurenine, the second step in the kynurenine pathway of tryptophan degradation. In Ralstonia pickettii (strain 12J), this protein is Kynurenine formamidase.